A 638-amino-acid chain; its full sequence is Threonine--tRNA ligase (638 aa).

One can recognise a TGS domain in the interval 1 to 61; that stretch reads MPIITLPDGS…NSDSKVVIIT (61 aa). Positions 242–533 are catalytic; it reads DHRKLGKKHS…LIEQYEAKFP (292 aa). Residues C333, H384, and H510 each contribute to the Zn(2+) site.

This sequence belongs to the class-II aminoacyl-tRNA synthetase family. Homodimer. It depends on Zn(2+) as a cofactor.

The protein resides in the cytoplasm. The catalysed reaction is tRNA(Thr) + L-threonine + ATP = L-threonyl-tRNA(Thr) + AMP + diphosphate + H(+). Its function is as follows. Catalyzes the attachment of threonine to tRNA(Thr) in a two-step reaction: L-threonine is first activated by ATP to form Thr-AMP and then transferred to the acceptor end of tRNA(Thr). Also edits incorrectly charged L-seryl-tRNA(Thr). This chain is Threonine--tRNA ligase, found in Prochlorococcus marinus (strain MIT 9215).